Reading from the N-terminus, the 228-residue chain is Ephrin-A5 (228 aa).

Residues 1–20 (MLHVEMLTLVFLVLWMCVFS) form the signal peptide. An Ephrin RBD domain is found at 29 to 162 (ADRYAVYWNS…KLKVFVRPTN (134 aa)). An N-linked (GlcNAc...) asparagine glycan is attached at asparagine 37. Disulfide bonds link cysteine 62-cysteine 102 and cysteine 90-cysteine 151. Residues 186 to 205 (EPADDTVHESAEPSRGENAA) form a disordered region. The segment covering 190 to 200 (DTVHESAEPSR) has biased composition (basic and acidic residues). The GPI-anchor amidated asparagine moiety is linked to residue asparagine 203. Positions 204 to 228 (AAQTPRIPSRLLAILLFLLAMLLTL) are cleaved as a propeptide — removed in mature form.

It belongs to the ephrin family. As to quaternary structure, binds to EPHB2. Interacts with EPHA8; activates EPHA8. Binds to the receptor tyrosine kinases EPHA2, EPHA3 and EPHB1. Forms a ternary EFNA5-EPHA3-ADAM10 complex mediating EFNA5 extracellular domain shedding by ADAM10 which regulates the EFNA5-EPHA3 complex internalization and function.

Its subcellular location is the cell membrane. It localises to the membrane. It is found in the caveola. Functionally, cell surface GPI-bound ligand for Eph receptors, a family of receptor tyrosine kinases which are crucial for migration, repulsion and adhesion during neuronal, vascular and epithelial development. Binds promiscuously Eph receptors residing on adjacent cells, leading to contact-dependent bidirectional signaling into neighboring cells. The signaling pathway downstream of the receptor is referred to as forward signaling while the signaling pathway downstream of the ephrin ligand is referred to as reverse signaling. Induces compartmentalized signaling within a caveolae-like membrane microdomain when bound to the extracellular domain of its cognate receptor. This signaling event requires the activity of the Fyn tyrosine kinase. Activates the EPHA3 receptor to regulate cell-cell adhesion and cytoskeletal organization. With the receptor EPHA2 may regulate lens fiber cells shape and interactions and be important for lens transparency maintenance. May function actively to stimulate axon fasciculation. The interaction of EFNA5 with EPHA5 also mediates communication between pancreatic islet cells to regulate glucose-stimulated insulin secretion. Cognate/functional ligand for EPHA7, their interaction regulates brain development modulating cell-cell adhesion and repulsion. This Homo sapiens (Human) protein is Ephrin-A5 (EFNA5).